Reading from the N-terminus, the 327-residue chain is Ferredoxin--NADP reductase (327 aa).

FAD is bound by residues Thr-18, Asp-37, Gln-45, Tyr-50, Ala-90, Phe-124, Asp-283, and Ser-324.

It belongs to the ferredoxin--NADP reductase type 2 family. Homodimer. It depends on FAD as a cofactor.

It carries out the reaction 2 reduced [2Fe-2S]-[ferredoxin] + NADP(+) + H(+) = 2 oxidized [2Fe-2S]-[ferredoxin] + NADPH. The chain is Ferredoxin--NADP reductase from Saccharopolyspora erythraea (strain ATCC 11635 / DSM 40517 / JCM 4748 / NBRC 13426 / NCIMB 8594 / NRRL 2338).